The primary structure comprises 409 residues: Putative competence-damage inducible protein (409 aa).

The protein belongs to the CinA family.

The chain is Putative competence-damage inducible protein from Clostridium botulinum (strain Okra / Type B1).